A 320-amino-acid chain; its full sequence is MARNKIALIGSGMIGGTLAHIAAREELGDVVLFDIAEGVAKGKALDIAEASPVFGKDSKLAGADDYAAIAGADVCIVTAGVPRKPGMSRDDLLGINLKVMKAVGEGIAKHAPDAFVICITNPLDAMVWALREFSGLPHNKVVGMAGVLDSARFRHFLADEFEVSVEDVTAFVMGGHGDTMVPLLRYSTIAGIPVPDMVKMGWSTDEKMDAIIDRTRKGGGEIVALLGTGSAFYAPAESAIDMAVSYLRDKKRILPCAAYLSGQFGQDDLYVGVPVVIGAGGVEKIVEIELNADEQTMFNNSVDSVKGLVSACKGLDPSLG.

NAD(+)-binding positions include 10 to 15 (GSGMIG) and aspartate 34. Positions 83 and 89 each coordinate substrate. Residues asparagine 96 and 119-121 (ITN) contribute to the NAD(+) site. Substrate is bound by residues asparagine 121 and arginine 152. Histidine 176 functions as the Proton acceptor in the catalytic mechanism.

Belongs to the LDH/MDH superfamily. MDH type 3 family.

It carries out the reaction (S)-malate + NAD(+) = oxaloacetate + NADH + H(+). Catalyzes the reversible oxidation of malate to oxaloacetate. This is Malate dehydrogenase from Maricaulis maris (strain MCS10) (Caulobacter maris).